The following is a 565-amino-acid chain: Mitochondrial distribution and morphology protein 34 (565 aa).

The region spanning 1 to 208 is the SMP-LTD domain; that stretch reads MAFNFNWSPL…VPEYRDRESE (208 aa). Residues 209-220 are compositionally biased toward polar residues; it reads SVNTLDLSSESG. 3 disordered regions span residues 209 to 241, 347 to 463, and 533 to 565; these read SVNTLDLSSESGPGQDPLASPPQDPVDASGNAL, FGSY…SRSA, and MQEQKIDPSGSRPFPDFWDDHSREEIPPPAYGH. Over residues 353–367 the composition is skewed to basic residues; it reads PGRHSRSHTKKRKKR. A compositionally biased stretch (basic and acidic residues) spans 368 to 378; that stretch reads VVDLRRPKTTD. Residues 382–391 are compositionally biased toward low complexity; sequence SVSGDSVFSS. Composition is skewed to polar residues over residues 392–402 and 439–463; these read ENATSAPTIFS and QGDQTLRRSNLSMSEAAQPSSSRSA.

The protein belongs to the MDM34 family. Component of the ER-mitochondria encounter structure (ERMES) or MDM complex, composed of mmm1, mdm10, mdm12 and mdm34.

It localises to the mitochondrion outer membrane. In terms of biological role, component of the ERMES/MDM complex, which serves as a molecular tether to connect the endoplasmic reticulum (ER) and mitochondria. Components of this complex are involved in the control of mitochondrial shape and protein biogenesis, and function in nonvesicular lipid trafficking between the ER and mitochondria. Mdm34 is required for the interaction of the ER-resident membrane protein mmm1 and the outer mitochondrial membrane-resident beta-barrel protein mdm10. The polypeptide is Mitochondrial distribution and morphology protein 34 (Talaromyces marneffei (strain ATCC 18224 / CBS 334.59 / QM 7333) (Penicillium marneffei)).